A 432-amino-acid chain; its full sequence is Protein trichome birefringence-like 23 (432 aa).

Residues Gln-13–Val-35 form a helical; Signal-anchor for type II membrane protein membrane-spanning segment. The short motif at Gly-153–Ser-155 is the GDS motif element. The short motif at Asp-404–Asn-418 is the DCXHWCLPGXXDXWN motif element.

Belongs to the PC-esterase family. TBL subfamily.

The protein resides in the membrane. Its function is as follows. May act as a bridging protein that binds pectin and other cell wall polysaccharides. Probably involved in maintaining esterification of pectins. May be involved in the specific O-acetylation of cell wall polymers. The sequence is that of Protein trichome birefringence-like 23 (TBL23) from Arabidopsis thaliana (Mouse-ear cress).